The chain runs to 208 residues: 3-demethoxyubiquinol 3-hydroxylase (208 aa).

Glutamate 57, glutamate 87, histidine 90, glutamate 139, glutamate 171, and histidine 174 together coordinate Fe cation.

Belongs to the COQ7 family. Requires Fe cation as cofactor.

The protein localises to the cell membrane. It catalyses the reaction a 5-methoxy-2-methyl-3-(all-trans-polyprenyl)benzene-1,4-diol + AH2 + O2 = a 3-demethylubiquinol + A + H2O. It functions in the pathway cofactor biosynthesis; ubiquinone biosynthesis. Its function is as follows. Catalyzes the hydroxylation of 2-nonaprenyl-3-methyl-6-methoxy-1,4-benzoquinol during ubiquinone biosynthesis. The polypeptide is 3-demethoxyubiquinol 3-hydroxylase (Burkholderia thailandensis (strain ATCC 700388 / DSM 13276 / CCUG 48851 / CIP 106301 / E264)).